The primary structure comprises 411 residues: Serpin A3-1 (411 aa).

The signal sequence occupies residues 1-24 (MRAERTSFLLALGLLVAGIRSVHC). Residues Asn-100, Asn-180, Asn-230, and Asn-264 are each glycosylated (N-linked (GlcNAc...) asparagine).

Belongs to the serpin family. In terms of assembly, homodimer. Post-translationally, N-glycosylated. Detected in all tissues examined (at protein level). Abundantly expressed in liver, kidney and spleen. Lowest levels were observed in diaphragm muscle.

It localises to the cytoplasmic vesicle. It is found in the secretory vesicle. Its subcellular location is the chromaffin granule. The protein resides in the secreted. Its function is as follows. Potent inhibitor of the serine proteases elastase and trypsin. Moderately inhibits the serine proteases plasmin and chymotrypsin, and the thiol protease proenkephalin-processing enzyme. Does not inhibit the serine proteases cathepsin G, furin, kallikrein, thrombin, tissue plasminogen activator and urokinase, or the cysteine proteases cathepsin B, cathepsin L and papain. The protein is Serpin A3-1 of Bos taurus (Bovine).